The chain runs to 217 residues: 3-demethoxyubiquinol 3-hydroxylase (217 aa).

E66, E96, H99, E148, E180, and H183 together coordinate Fe cation.

Belongs to the COQ7 family. The cofactor is Fe cation.

It is found in the cell membrane. The enzyme catalyses a 5-methoxy-2-methyl-3-(all-trans-polyprenyl)benzene-1,4-diol + AH2 + O2 = a 3-demethylubiquinol + A + H2O. It participates in cofactor biosynthesis; ubiquinone biosynthesis. In terms of biological role, catalyzes the hydroxylation of 2-nonaprenyl-3-methyl-6-methoxy-1,4-benzoquinol during ubiquinone biosynthesis. The sequence is that of 3-demethoxyubiquinol 3-hydroxylase from Xylella fastidiosa (strain Temecula1 / ATCC 700964).